We begin with the raw amino-acid sequence, 309 residues long: Partitioning defective protein 6 (309 aa).

A PB1 domain is found at 14–96 (TLQVKSKFDS…PLLRLLIQRR (83 aa)). In terms of domain architecture, Pseudo-CRIB spans 132-149 (ISNPEDFRQVSAIIDVDI). Positions 156–249 (RVRLCKHGQE…NLIITVKPAN (94 aa)) constitute a PDZ domain. Positions 249 to 270 (NQRNTLSRGPSQQGTPNASEMS) are enriched in polar residues. Residues 249–309 (NQRNTLSRGP…DANDSDSGED (61 aa)) form a disordered region.

It belongs to the PAR6 family. As to quaternary structure, interacts with par-3, required for its peripheral localization, and with cdc-42, required for the activation of a par-3/par-6/pkc-3 complex. In terms of tissue distribution, colocalized with par-3 at all stages in early embryos, at the anterior cortex of the embryo. Patchy expression observed at the periphery after completion of meiosis I and in meiosis II, which on completion of metaphase II, is restricted to the anterior 85% of embryo length; this decreases to 55% in embryos between prophase and telophase of the first mitosis. During the first cleavage, expression is detected in the advancing furrow. Along with pkc-3, is unable to associate with the apical cortex of cells that lack par-3. Transiently coexpressed and colocalized with par-3 and pkc-3, asymmetrically in the developing somatic gonad, including the spermathecal precursor cells of L4 larvae.

It is found in the cytoplasm. The protein resides in the cell membrane. Its subcellular location is the cell junction. The protein localises to the tight junction. Necessary for apicobasal and anterior-posterior asymmetries associated with cell adhesion and gastrulation during the first few cell cycles of embryogenesis. Required for localizing/ maintaining par-3 at the cell periphery. Regulates mes-1 expression and/or localization pattern during early embryogenesis. Acts together with par-3 and pkc-3 in maintaining epithelial cell polarity in the distal spermatheca. Plays a role in endosome and Golgi body positioning. The sequence is that of Partitioning defective protein 6 from Caenorhabditis elegans.